An 86-amino-acid polypeptide reads, in one-letter code: Anti-adapter protein IraP (86 aa).

Residues 1 to 36 (MKNLIAELLFKLAQKEEESKELCAQVEALEIIVTAM) adopt a coiled-coil conformation.

The protein belongs to the IraP family. Interacts with RssB.

It localises to the cytoplasm. Inhibits RpoS proteolysis by regulating RssB activity, thereby increasing the stability of the sigma stress factor RpoS especially during phosphate starvation, but also in stationary phase and during nitrogen starvation. Its effect on RpoS stability is due to its interaction with RssB, which probably blocks the interaction of RssB with RpoS, and the consequent delivery of the RssB-RpoS complex to the ClpXP protein degradation pathway. This Escherichia coli O7:K1 (strain IAI39 / ExPEC) protein is Anti-adapter protein IraP.